A 150-amino-acid polypeptide reads, in one-letter code: SsrA-binding protein (150 aa).

The protein belongs to the SmpB family.

Its subcellular location is the cytoplasm. Required for rescue of stalled ribosomes mediated by trans-translation. Binds to transfer-messenger RNA (tmRNA), required for stable association of tmRNA with ribosomes. tmRNA and SmpB together mimic tRNA shape, replacing the anticodon stem-loop with SmpB. tmRNA is encoded by the ssrA gene; the 2 termini fold to resemble tRNA(Ala) and it encodes a 'tag peptide', a short internal open reading frame. During trans-translation Ala-aminoacylated tmRNA acts like a tRNA, entering the A-site of stalled ribosomes, displacing the stalled mRNA. The ribosome then switches to translate the ORF on the tmRNA; the nascent peptide is terminated with the 'tag peptide' encoded by the tmRNA and targeted for degradation. The ribosome is freed to recommence translation, which seems to be the essential function of trans-translation. The polypeptide is SsrA-binding protein (Borreliella burgdorferi (strain ATCC 35210 / DSM 4680 / CIP 102532 / B31) (Borrelia burgdorferi)).